The sequence spans 373 residues: Chaperone protein DnaJ (373 aa).

The J domain occupies 4-68; that stretch reads DFYEILGVSR…QARANYDRFG (65 aa). Residues 132-214 form a CR-type zinc finger; that stretch reads GGEKEIRINH…CGGQGHIQVS (83 aa). Zn(2+)-binding residues include Cys-145, Cys-148, Cys-162, Cys-165, Cys-188, Cys-191, Cys-202, and Cys-205. 4 CXXCXGXG motif repeats span residues 145–152, 162–169, 188–195, and 202–209; these read CKTCQGTG, CSTCGGVG, CPTCGGSG, and CESCGGQG.

This sequence belongs to the DnaJ family. As to quaternary structure, homodimer. Zn(2+) serves as cofactor.

The protein localises to the cytoplasm. Participates actively in the response to hyperosmotic and heat shock by preventing the aggregation of stress-denatured proteins and by disaggregating proteins, also in an autonomous, DnaK-independent fashion. Unfolded proteins bind initially to DnaJ; upon interaction with the DnaJ-bound protein, DnaK hydrolyzes its bound ATP, resulting in the formation of a stable complex. GrpE releases ADP from DnaK; ATP binding to DnaK triggers the release of the substrate protein, thus completing the reaction cycle. Several rounds of ATP-dependent interactions between DnaJ, DnaK and GrpE are required for fully efficient folding. Also involved, together with DnaK and GrpE, in the DNA replication of plasmids through activation of initiation proteins. In Thermosynechococcus vestitus (strain NIES-2133 / IAM M-273 / BP-1), this protein is Chaperone protein DnaJ.